A 164-amino-acid chain; its full sequence is 6,7-dimethyl-8-ribityllumazine synthase (164 aa).

5-amino-6-(D-ribitylamino)uracil is bound by residues F28, 62–64, and 86–88; these read ALE and AVI. 91–92 is a (2S)-2-hydroxy-3-oxobutyl phosphate binding site; that stretch reads ET. The active-site Proton donor is H94. Residue N119 coordinates 5-amino-6-(D-ribitylamino)uracil. R133 contributes to the (2S)-2-hydroxy-3-oxobutyl phosphate binding site.

The protein belongs to the DMRL synthase family.

The enzyme catalyses (2S)-2-hydroxy-3-oxobutyl phosphate + 5-amino-6-(D-ribitylamino)uracil = 6,7-dimethyl-8-(1-D-ribityl)lumazine + phosphate + 2 H2O + H(+). The protein operates within cofactor biosynthesis; riboflavin biosynthesis; riboflavin from 2-hydroxy-3-oxobutyl phosphate and 5-amino-6-(D-ribitylamino)uracil: step 1/2. Catalyzes the formation of 6,7-dimethyl-8-ribityllumazine by condensation of 5-amino-6-(D-ribitylamino)uracil with 3,4-dihydroxy-2-butanone 4-phosphate. This is the penultimate step in the biosynthesis of riboflavin. The chain is 6,7-dimethyl-8-ribityllumazine synthase from Nitrosomonas europaea (strain ATCC 19718 / CIP 103999 / KCTC 2705 / NBRC 14298).